A 94-amino-acid polypeptide reads, in one-letter code: RxLR effector protein PITG_15972 (94 aa).

The first 21 residues, 1 to 21 (MRAVYILAMACAATLQASSSA), serve as a signal peptide directing secretion. Positions 50 to 65 (RLLRVEDKEEETEEER) match the RxLR-dEER motif.

Belongs to the RxLR effector family.

The protein resides in the secreted. The protein localises to the host cytoplasm. Its subcellular location is the host nucleus. Its function is as follows. Effector that enhances P.infestans colonization of Nicotiana benthamiana leaves. This Phytophthora infestans (strain T30-4) (Potato late blight agent) protein is RxLR effector protein PITG_15972.